A 615-amino-acid polypeptide reads, in one-letter code: Homologous recombination OB-fold protein (615 aa).

3 disordered regions span residues 42 to 75 (LRPVSSRPQETVQTQSSRPVPSYPTSNQSVPRLC), 213 to 326 (PWPS…PVTQ), and 546 to 590 (DFLE…FPEE). Position 47 is a phosphoserine (Ser47). 3 stretches are compositionally biased toward polar residues: residues 47–71 (SRPQETVQTQSSRPVPSYPTSNQSV), 232–241 (SCVSTSQQRG), and 257–275 (IRSSPQNYGPGQPLQSPRA). Over residues 302-317 (SSRAPVSSVESPVSTP) the composition is skewed to low complexity.

In terms of assembly, interacts with MCM8; this interaction is necessary for MCM8-MCM9 helicase complex recruitment to DNA damage sites. Interacts with RPA1; this interaction associates HROB with the RPA complex.

Its subcellular location is the nucleus. It localises to the chromosome. DNA-binding protein involved in homologous recombination that acts by recruiting the MCM8-MCM9 helicase complex to sites of DNA damage to promote DNA repair synthesis. In Mus musculus (Mouse), this protein is Homologous recombination OB-fold protein.